Consider the following 155-residue polypeptide: Small ribosomal subunit protein bS16 (155 aa).

The segment at 113–155 (ADGAPTGEAIQQKKKKAPKKAEAAEAEAPAEEPAAESADAASE) is disordered. Residues 136–146 (AEAEAPAEEPA) are compositionally biased toward acidic residues.

The protein belongs to the bacterial ribosomal protein bS16 family.

This chain is Small ribosomal subunit protein bS16, found in Mycobacteroides abscessus (strain ATCC 19977 / DSM 44196 / CCUG 20993 / CIP 104536 / JCM 13569 / NCTC 13031 / TMC 1543 / L948) (Mycobacterium abscessus).